The chain runs to 450 residues: UDP-N-acetylmuramoylalanine--D-glutamate ligase (450 aa).

119–125 (GSNGKTT) contacts ATP.

It belongs to the MurCDEF family.

It localises to the cytoplasm. It carries out the reaction UDP-N-acetyl-alpha-D-muramoyl-L-alanine + D-glutamate + ATP = UDP-N-acetyl-alpha-D-muramoyl-L-alanyl-D-glutamate + ADP + phosphate + H(+). It functions in the pathway cell wall biogenesis; peptidoglycan biosynthesis. Cell wall formation. Catalyzes the addition of glutamate to the nucleotide precursor UDP-N-acetylmuramoyl-L-alanine (UMA). The polypeptide is UDP-N-acetylmuramoylalanine--D-glutamate ligase (Bacillus cereus (strain ATCC 10987 / NRS 248)).